A 426-amino-acid polypeptide reads, in one-letter code: Serine--tRNA ligase (426 aa).

Thr233–Glu235 is a binding site for L-serine. Arg264–Glu266 contributes to the ATP binding site. Residue Glu287 coordinates L-serine. An ATP-binding site is contributed by Glu351–Ser354. Ser387 provides a ligand contact to L-serine.

It belongs to the class-II aminoacyl-tRNA synthetase family. Type-1 seryl-tRNA synthetase subfamily. As to quaternary structure, homodimer. The tRNA molecule binds across the dimer.

It is found in the cytoplasm. It catalyses the reaction tRNA(Ser) + L-serine + ATP = L-seryl-tRNA(Ser) + AMP + diphosphate + H(+). The catalysed reaction is tRNA(Sec) + L-serine + ATP = L-seryl-tRNA(Sec) + AMP + diphosphate + H(+). It participates in aminoacyl-tRNA biosynthesis; selenocysteinyl-tRNA(Sec) biosynthesis; L-seryl-tRNA(Sec) from L-serine and tRNA(Sec): step 1/1. Functionally, catalyzes the attachment of serine to tRNA(Ser). Is also able to aminoacylate tRNA(Sec) with serine, to form the misacylated tRNA L-seryl-tRNA(Sec), which will be further converted into selenocysteinyl-tRNA(Sec). The chain is Serine--tRNA ligase from Clostridium botulinum (strain 657 / Type Ba4).